A 396-amino-acid chain; its full sequence is Mitogen-activated protein kinase mpkC (396 aa).

In terms of domain architecture, Protein kinase spans 20–299; the sequence is YSDLQPVGLG…AAKALEHPYL (280 aa). ATP-binding positions include 26 to 34 and lysine 49; that span reads VGLGAFGLV. The active-site Proton acceptor is the aspartate 141. Threonine 171 carries the post-translational modification Phosphothreonine. Positions 171-173 match the TXY motif; it reads TGY. At tyrosine 173 the chain carries Phosphotyrosine.

This sequence belongs to the protein kinase superfamily. Ser/Thr protein kinase family. MAP kinase subfamily. HOG1 sub-subfamily. The cofactor is Mg(2+). Dually phosphorylated on Thr-171 and Tyr-173, which activates the enzyme.

It catalyses the reaction L-seryl-[protein] + ATP = O-phospho-L-seryl-[protein] + ADP + H(+). The catalysed reaction is L-threonyl-[protein] + ATP = O-phospho-L-threonyl-[protein] + ADP + H(+). With respect to regulation, activated by tyrosine and threonine phosphorylation. Functionally, mitogen-activated protein kinase required for growth on media where sorbitol or mannitol is the sole carbon source. This chain is Mitogen-activated protein kinase mpkC (mpkC), found in Aspergillus niger (strain ATCC MYA-4892 / CBS 513.88 / FGSC A1513).